The primary structure comprises 323 residues: Melanocortin receptor 3 (323 aa).

Topologically, residues 1–37 are extracellular; that stretch reads MNSSCCLSSVSPMLPNLSEHPAAPPASNRSGSGFCEQ. N2, N16, and N28 each carry an N-linked (GlcNAc...) asparagine glycan. A helical transmembrane segment spans residues 38–63; that stretch reads VFIKPEVFLALGIVSLMENILVILAV. Topologically, residues 64-75 are cytoplasmic; it reads VRNGNLHSPMYF. The helical transmembrane segment at 76-100 threads the bilayer; sequence FLCSLAAADMLVSLSNSLETIMIAV. The Extracellular segment spans residues 101 to 118; the sequence is INSDSLTLEDQFIQHMDN. Residues 119–140 traverse the membrane as a helical segment; it reads IFDSMICISLVASICNLLAIAI. Topologically, residues 141–160 are cytoplasmic; the sequence is DRYVTIFYALRYHSIMTVRK. The helical transmembrane segment at 161–181 threads the bilayer; sequence ALTLIGVIWVCCGICGVMFII. The Extracellular segment spans residues 182–186; the sequence is YSESK. A helical membrane pass occupies residues 187–210; that stretch reads MVIVCLITMFFAMVLLMGTLYIHM. At 211–245 the chain is on the cytoplasmic side; sequence FLFARLHVQRIAVLPPAGVVAPQQHSCMKGAVTIT. Residues 246–268 traverse the membrane as a helical segment; that stretch reads ILLGVFIFCWAPFFLHLVLIITC. At 269-277 the chain is on the extracellular side; that stretch reads PTNPYCICY. The chain crosses the membrane as a helical span at residues 278 to 301; it reads TAHFNTYLVLIMCNSVIDPLIYAF. At 302 to 323 the chain is on the cytoplasmic side; it reads RSLELRNTFKEILCGCNSMNLG. Residue C315 is the site of S-palmitoyl cysteine attachment.

The protein belongs to the G-protein coupled receptor 1 family. As to expression, brain.

The protein resides in the cell membrane. Its function is as follows. Receptor for MSH (alpha, beta and gamma) and ACTH. This receptor is mediated by G proteins which activate adenylate cyclase. Required for expression of anticipatory patterns of activity and wakefulness during periods of limited nutrient availability and for the normal regulation of circadian clock activity in the brain. The protein is Melanocortin receptor 3 (Mc3r) of Mus musculus (Mouse).